The primary structure comprises 333 residues: Secreted mono- and diacylglycerol lipase 1 (333 aa).

A signal peptide spans 1 to 16; the sequence is MMLILSILSIIAFAAA. 2 cysteine pairs are disulfide-bonded: Cys56/Cys268 and Cys276/Cys298. The Nucleophile role is filled by Ser176. Active-site residues include Asp230 and His288.

The protein belongs to the AB hydrolase superfamily. Lipase family. Class 3 subfamily.

The protein resides in the secreted. The catalysed reaction is a monoacylglycerol + H2O = glycerol + a fatty acid + H(+). The enzyme catalyses a diacylglycerol + H2O = a monoacylglycerol + a fatty acid + H(+). In terms of biological role, secreted mono- and diacylglycerol lipase that allows the use of hydrolyzed lipids as carbon source and might play a role in pathogenicity. Shows lipolytic activity towards olive oil and p-nitrophenylpalmitate. This chain is Secreted mono- and diacylglycerol lipase 1, found in Fusarium solani (Filamentous fungus).